A 394-amino-acid chain; its full sequence is Growth-regulating factor 4 (394 aa).

Residues 64–99 (PFTAAQYEELEQQALIYKYLVAGVPVPPDLVLPIRR) form the QLQ domain. Positions 125 to 169 (DPEPGRCRRTDGKKWRCSKEAAPDSKYCERHMHRGRNRSRKPVET) constitute a WRC domain. 2 short sequence motifs (bipartite nuclear localization signal) span residues 130 to 140 (RCRRTDGKKWR) and 158 to 165 (RGRNRSRK). Residues 156–180 (MHRGRNRSRKPVETQLVAQSQPPSS) are disordered. Low complexity predominate over residues 170 to 180 (QLVAQSQPPSS).

Belongs to the GRF family. As to quaternary structure, interacts with GIF1. Interacts with GSK2. As to expression, expressed in stems. Expressed in panicles.

It localises to the nucleus. With respect to regulation, transactivation activity is repressed by GSK2. Transcription activator that plays a role in the regulation of meristematic function in leaves, stems and inflorescences. Transcription activator that plays a regulatory role in grain development. Positively regulates grain size by promoting cell division and expansion, leading to increased grain length and width. Positively regulates the expression of genes promoting cell proliferation. Activates the expression of expansin genes to promote cell expansion and grain size. May promote grain size by activating brassinosteroid responses. Component of a network formed by the microRNA396 (miRNA396), the GRFs and their interacting factors (GIFs) acting in the regulation of meristem function, at least partially through the control of cell proliferation. Component of the miRNA396c-GRF4-GIF1 regulatory module that plays an important role in grain size determination. The sequence is that of Growth-regulating factor 4 from Oryza sativa subsp. japonica (Rice).